Here is a 212-residue protein sequence, read N- to C-terminus: Large ribosomal subunit protein bL25 (212 aa).

It belongs to the bacterial ribosomal protein bL25 family. CTC subfamily. In terms of assembly, part of the 50S ribosomal subunit; part of the 5S rRNA/L5/L18/L25 subcomplex. Contacts the 5S rRNA. Binds to the 5S rRNA independently of L5 and L18.

This is one of the proteins that binds to the 5S RNA in the ribosome where it forms part of the central protuberance. The sequence is that of Large ribosomal subunit protein bL25 from Leptospira interrogans serogroup Icterohaemorrhagiae serovar copenhageni (strain Fiocruz L1-130).